The sequence spans 711 residues: Probable cyclic nucleotide-gated ion channel 10 (711 aa).

Over 1–81 the chain is Cytoplasmic; that stretch reads MAFSHDNRVR…QDSFLQNWNK (81 aa). Residues 82–102 form a helical membrane-spanning segment; that stretch reads IFLFACVVALAIDPLFFYIPI. Over 103–116 the chain is Extracellular; it reads VDSARHCLTLDSKL. A helical membrane pass occupies residues 117-137; sequence EIAASLLRTLIDAFYIIHIVF. At 138-170 the chain is on the cytoplasmic side; the sequence is QFRTAYIAPSSRVFGRGELVDDAKAIALKYLSS. The helical transmembrane segment at 171–191 threads the bilayer; sequence YFIIDLLSILPLPQIVVLAVI. At 192-204 the chain is on the extracellular side; it reads PSVNQPVSLLTKD. A helical membrane pass occupies residues 205-225; sequence YLKFSIIAQYVPRILRMYPLY. Residues 226 to 243 are Cytoplasmic-facing; sequence TEVTRTSGIVTETAWAGA. A helical transmembrane segment spans residues 244 to 264; that stretch reads AWNLSLYMLASHVFGALWYLI. The Extracellular portion of the chain corresponds to 265–366; that stretch reads SVEREDRCWQ…GQNLQTSKFV (102 aa). Residues 367–387 form a helical membrane-spanning segment; sequence GEIIFAISICISGLVLFALLI. Topologically, residues 388-711 are cytoplasmic; sequence GNMQKYLEST…DFTANHTTDP (324 aa). Residues 473–603 and Glu-544 each bind a nucleoside 3',5'-cyclic phosphate; that span reads LFEI…TFRF. A calmodulin-binding region spans residues 589-604; that stretch reads FRRLHSKQLQHTFRFY. Residues 609-638 form the IQ domain; it reads RTWSVSFIQAAWRRYCRRKLAKSLRDEEDR. Residues 689 to 711 are disordered; that stretch reads YTLPLLPQKPTEPDFTANHTTDP.

This sequence belongs to the cyclic nucleotide-gated cation channel (TC 1.A.1.5) family. In terms of assembly, homotetramer or heterotetramer.

The protein localises to the cell membrane. Functionally, probable cyclic nucleotide-gated ion channel. The polypeptide is Probable cyclic nucleotide-gated ion channel 10 (CNGC10) (Arabidopsis thaliana (Mouse-ear cress)).